The sequence spans 338 residues: Lipoate-protein ligase A (338 aa).

The BPL/LPL catalytic domain maps to 29-216 (PATQRVLFLW…AFFVHYGERV (188 aa)). Residues arginine 71, 76 to 79 (GAVF), and lysine 134 each bind ATP. Residue lysine 134 coordinates (R)-lipoate.

Belongs to the LplA family. In terms of assembly, monomer.

The protein localises to the cytoplasm. The enzyme catalyses L-lysyl-[lipoyl-carrier protein] + (R)-lipoate + ATP = N(6)-[(R)-lipoyl]-L-lysyl-[lipoyl-carrier protein] + AMP + diphosphate + H(+). It participates in protein modification; protein lipoylation via exogenous pathway; protein N(6)-(lipoyl)lysine from lipoate: step 1/2. It functions in the pathway protein modification; protein lipoylation via exogenous pathway; protein N(6)-(lipoyl)lysine from lipoate: step 2/2. Its function is as follows. Catalyzes both the ATP-dependent activation of exogenously supplied lipoate to lipoyl-AMP and the transfer of the activated lipoyl onto the lipoyl domains of lipoate-dependent enzymes. This is Lipoate-protein ligase A from Salmonella newport (strain SL254).